The chain runs to 354 residues: L-Lys-D/L-Arg epimerase (354 aa).

Substrate-binding positions include T135 and 160–162 (KIK). Mg(2+)-binding residues include D190, E215, and D240. Residues K265, D295, and 318-320 (DLD) contribute to the substrate site.

It belongs to the mandelate racemase/muconate lactonizing enzyme family. The cofactor is Mg(2+).

Functionally, catalyzes the epimerization of L-Lys-L-Arg to L-Lys-D-Arg (in vitro). Catalyzes the epimerization of positively charged dipeptides, with a preference for substrates with a basic amino acid in the second position. Has epimerase activity with L-Lys-L-Lys, L-Arg-L-Arg, L-Val-L-Arg, L-Val-L-Lys and L-Ala-L-Arg (in vitro). The polypeptide is L-Lys-D/L-Arg epimerase (Desulforapulum autotrophicum (strain ATCC 43914 / DSM 3382 / VKM B-1955 / HRM2) (Desulfobacterium autotrophicum)).